A 399-amino-acid chain; its full sequence is Phosphoglycerate kinase (399 aa).

Residues 22 to 24 (DFN), Arg38, 61 to 64 (HLGR), Arg120, and Arg153 each bind substrate. ATP-binding positions include Lys204, Glu326, and 352–355 (GGDT).

This sequence belongs to the phosphoglycerate kinase family. As to quaternary structure, monomer.

The protein resides in the cytoplasm. It catalyses the reaction (2R)-3-phosphoglycerate + ATP = (2R)-3-phospho-glyceroyl phosphate + ADP. It functions in the pathway carbohydrate degradation; glycolysis; pyruvate from D-glyceraldehyde 3-phosphate: step 2/5. This chain is Phosphoglycerate kinase, found in Citrifermentans bemidjiense (strain ATCC BAA-1014 / DSM 16622 / JCM 12645 / Bem) (Geobacter bemidjiensis).